The primary structure comprises 213 residues: MQPYQRDFIRFAIDRGVLRFGEFTLKSGRTSPYFFNAGLFNTGSALAQLGRCYAAAIVDSKIPFDVLFGPAYKGIPLAAATAVALAEQHQLDVPWCFNRKEAKDHGEGGSLVGAPLAGDVLIIDDVITAGTAIREVMQIINAQQAKAAGVLIALNREERGNGELSAIQEVERDFGIPVVSIVSLTQVLEFLADDPQLKQHLPAVEAYRAQYGI.

Lysine 26 serves as a coordination point for 5-phospho-alpha-D-ribose 1-diphosphate. 34-35 (FF) serves as a coordination point for orotate. Residues 72-73 (YK), arginine 99, lysine 100, lysine 103, histidine 105, and 124-132 (DDVITAGTA) each bind 5-phospho-alpha-D-ribose 1-diphosphate. Orotate contacts are provided by threonine 128 and arginine 156.

Belongs to the purine/pyrimidine phosphoribosyltransferase family. PyrE subfamily. Homodimer. The cofactor is Mg(2+).

The catalysed reaction is orotidine 5'-phosphate + diphosphate = orotate + 5-phospho-alpha-D-ribose 1-diphosphate. It participates in pyrimidine metabolism; UMP biosynthesis via de novo pathway; UMP from orotate: step 1/2. Its function is as follows. Catalyzes the transfer of a ribosyl phosphate group from 5-phosphoribose 1-diphosphate to orotate, leading to the formation of orotidine monophosphate (OMP). The chain is Orotate phosphoribosyltransferase from Pseudomonas putida (strain W619).